Here is a 193-residue protein sequence, read N- to C-terminus: MTFLFIVITLLALIFGAILGFASIKLKVEADPVVEKIDAILPQSQCGQCGYPGCKPYAEAICNGDEITKCIPGGQTTIVKIAEILGVDVPTMEGIEEPIEKVAFIDENMCIGCTKCIQACPVDAIIGTNKAMHTIIPDLCTGCELCVAPCPTDCILMIPVKKNIDNWDWKFDAKLVIPVMNVDGSEKKLVVGE.

A hydrophobic region spans residues 1–23; sequence MTFLFIVITLLALIFGAILGFAS. Residues 29 to 87 form the 4Fe-4S domain; that stretch reads EADPVVEKIDAILPQSQCGQCGYPGCKPYAEAICNGDEITKCIPGGQTTIVKIAEILGV. Residues cysteine 46, cysteine 49, cysteine 54, cysteine 70, cysteine 110, cysteine 113, cysteine 116, cysteine 120, cysteine 140, cysteine 143, cysteine 146, and cysteine 150 each contribute to the [4Fe-4S] cluster site. 2 4Fe-4S ferredoxin-type domains span residues 101-130 and 131-160; these read KVAF…GTNK and AMHT…MIPV.

Belongs to the 4Fe4S bacterial-type ferredoxin family. RnfB subfamily. In terms of assembly, the complex is composed of six subunits: RnfA, RnfB, RnfC, RnfD, RnfE and RnfG. Requires [4Fe-4S] cluster as cofactor.

It localises to the cell inner membrane. Its function is as follows. Part of a membrane-bound complex that couples electron transfer with translocation of ions across the membrane. This Haemophilus influenzae (strain 86-028NP) protein is Ion-translocating oxidoreductase complex subunit B.